A 652-amino-acid chain; its full sequence is Acetyl-coenzyme A synthetase (652 aa).

CoA contacts are provided by residues 193 to 196 (RRGK) and Thr312. Residues 388-390 (GEP), 412-417 (DTWWQT), Asp501, and Arg516 contribute to the ATP site. Ser524 provides a ligand contact to CoA. Positions 538, 540, and 543 each coordinate Mg(2+). Lys611 carries the N6-acetyllysine modification.

It belongs to the ATP-dependent AMP-binding enzyme family. It depends on Mg(2+) as a cofactor. In terms of processing, acetylated. Deacetylation by the SIR2-homolog deacetylase activates the enzyme.

The enzyme catalyses acetate + ATP + CoA = acetyl-CoA + AMP + diphosphate. In terms of biological role, catalyzes the conversion of acetate into acetyl-CoA (AcCoA), an essential intermediate at the junction of anabolic and catabolic pathways. AcsA undergoes a two-step reaction. In the first half reaction, AcsA combines acetate with ATP to form acetyl-adenylate (AcAMP) intermediate. In the second half reaction, it can then transfer the acetyl group from AcAMP to the sulfhydryl group of CoA, forming the product AcCoA. This chain is Acetyl-coenzyme A synthetase, found in Streptomyces avermitilis (strain ATCC 31267 / DSM 46492 / JCM 5070 / NBRC 14893 / NCIMB 12804 / NRRL 8165 / MA-4680).